A 581-amino-acid chain; its full sequence is 2-hydroxyacyl-CoA lyase 1 (581 aa).

Phosphoserine occurs at positions 4 and 6. Residue glutamate 63 coordinates thiamine diphosphate. Lysine 354, lysine 361, and lysine 368 each carry N6-succinyllysine. Residues 404–487 (TMDIGRTMLQ…IILLVVNNNG (84 aa)) form a thiamine pyrophosphate binding region. Residues aspartate 458 and asparagine 485 each contribute to the Mg(2+) site. A Microbody targeting signal motif is present at residues 579 to 581 (SNM).

Belongs to the TPP enzyme family. As to quaternary structure, homotetramer. It depends on Mg(2+) as a cofactor. The cofactor is thiamine diphosphate. As to expression, predominanly expressed in liver.

It localises to the peroxisome. The catalysed reaction is a 2-hydroxy-3-methyl fatty acyl-CoA = a 2-methyl-branched fatty aldehyde + formyl-CoA. The enzyme catalyses an (R)-2-hydroxy-long-chain-fatty acyl-CoA = a long-chain fatty aldehyde + formyl-CoA. It catalyses the reaction 2-hydroxy-3-methylhexadecanoyl-CoA = 2-methylpentadecanal + formyl-CoA. It carries out the reaction 2-hydroxyoctadecanoyl-CoA = heptadecanal + formyl-CoA. The catalysed reaction is 2-hydroxyphytanoyl-CoA = 2,6,10,14-tetramethylpentadecanal + formyl-CoA. Its pathway is lipid metabolism; fatty acid metabolism. Functionally, peroxisomal 2-OH acyl-CoA lyase involved in the cleavage (C1 removal) reaction in the fatty acid alpha-oxydation in a thiamine pyrophosphate (TPP)-dependent manner. Involved in the degradation of 3-methyl-branched fatty acids like phytanic acid and the shortening of 2-hydroxy long-chain fatty acids. Plays a significant role in the biosynthesis of heptadecanal in the liver. The polypeptide is 2-hydroxyacyl-CoA lyase 1 (Hacl1) (Mus musculus (Mouse)).